Consider the following 293-residue polypeptide: 33 kDa chaperonin (293 aa).

Cystine bridges form between Cys-238–Cys-240 and Cys-271–Cys-274.

The protein belongs to the HSP33 family. Under oxidizing conditions two disulfide bonds are formed involving the reactive cysteines. Under reducing conditions zinc is bound to the reactive cysteines and the protein is inactive.

It is found in the cytoplasm. Redox regulated molecular chaperone. Protects both thermally unfolding and oxidatively damaged proteins from irreversible aggregation. Plays an important role in the bacterial defense system toward oxidative stress. This chain is 33 kDa chaperonin, found in Clostridium beijerinckii (strain ATCC 51743 / NCIMB 8052) (Clostridium acetobutylicum).